We begin with the raw amino-acid sequence, 139 residues long: ATP synthase epsilon chain (139 aa).

It belongs to the ATPase epsilon chain family. In terms of assembly, F-type ATPases have 2 components, CF(1) - the catalytic core - and CF(0) - the membrane proton channel. CF(1) has five subunits: alpha(3), beta(3), gamma(1), delta(1), epsilon(1). CF(0) has three main subunits: a, b and c.

It is found in the cell inner membrane. Produces ATP from ADP in the presence of a proton gradient across the membrane. The sequence is that of ATP synthase epsilon chain from Shigella boydii serotype 18 (strain CDC 3083-94 / BS512).